A 530-amino-acid polypeptide reads, in one-letter code: Type II methyltransferase M.MjaII (530 aa).

This sequence belongs to the N(4)/N(6)-methyltransferase family. N(4) subfamily.

It catalyses the reaction a 2'-deoxycytidine in DNA + S-adenosyl-L-methionine = an N(4)-methyl-2'-deoxycytidine in DNA + S-adenosyl-L-homocysteine + H(+). Its function is as follows. An alpha subtype methylase that recognizes the double-stranded sequence 5'-GGNCC-3', methylates C-5 on both strands, and protects the DNA from cleavage by the MjaII endonuclease. The protein is Type II methyltransferase M.MjaII (mjaIIM) of Methanocaldococcus jannaschii (strain ATCC 43067 / DSM 2661 / JAL-1 / JCM 10045 / NBRC 100440) (Methanococcus jannaschii).